Reading from the N-terminus, the 250-residue chain is V-type proton ATPase subunit D (250 aa).

This sequence belongs to the V-ATPase D subunit family. In terms of assembly, V-ATPase is a heteromultimeric enzyme made up of two complexes: the ATP-hydrolytic V1 complex and the proton translocation V0 complex. The V1 complex consists of three catalytic AB heterodimers that form a heterohexamer, three peripheral stalks each consisting of EG heterodimers, one central rotor including subunits D and F, and the regulatory subunits C and H. The proton translocation complex V0 consists of the proton transport subunit a, a ring of proteolipid subunits c9c'', rotary subunit d, subunits e and f, and two accessory subunits ATP6AP1/Ac45 and ATP6AP2/PRR.

Its function is as follows. Subunit of the V1 complex of vacuolar(H+)-ATPase (V-ATPase), a multisubunit enzyme composed of a peripheral complex (V1) that hydrolyzes ATP and a membrane integral complex (V0) that translocates protons. V-ATPase is responsible for acidifying and maintaining the pH of intracellular compartments and in some cell types, is targeted to the plasma membrane, where it is responsible for acidifying the extracellular environment. The polypeptide is V-type proton ATPase subunit D (VATPD) (Suberites domuncula (Sponge)).